The following is a 56-amino-acid chain: Male-specific sperm protein Mst87F (56 aa).

The protein belongs to the MST(3)CGP family. As to expression, testis.

The protein is Male-specific sperm protein Mst87F (Mst87F) of Drosophila melanogaster (Fruit fly).